Reading from the N-terminus, the 146-residue chain is UPF0178 protein BCA_3127 (146 aa).

This sequence belongs to the UPF0178 family.

The protein is UPF0178 protein BCA_3127 of Bacillus cereus (strain 03BB102).